The following is a 387-amino-acid chain: Phosphoglycerate kinase (387 aa).

Substrate is bound by residues 21–23, arginine 36, 59–62, arginine 113, and arginine 146; these read DLN and HLGR. ATP-binding positions include lysine 197, glutamate 314, and 340–343; that span reads GGDT.

It belongs to the phosphoglycerate kinase family. In terms of assembly, monomer.

Its subcellular location is the cytoplasm. The catalysed reaction is (2R)-3-phosphoglycerate + ATP = (2R)-3-phospho-glyceroyl phosphate + ADP. It functions in the pathway carbohydrate degradation; glycolysis; pyruvate from D-glyceraldehyde 3-phosphate: step 2/5. In Alcanivorax borkumensis (strain ATCC 700651 / DSM 11573 / NCIMB 13689 / SK2), this protein is Phosphoglycerate kinase.